A 217-amino-acid chain; its full sequence is Large ribosomal subunit protein uL3 (217 aa).

Positions 127 to 162 are disordered; sequence GFSRGPMSHGSKNHRAPGSTGAGTTPGRIYPGKRMA. Low complexity predominate over residues 142-153; the sequence is APGSTGAGTTPG.

This sequence belongs to the universal ribosomal protein uL3 family. In terms of assembly, part of the 50S ribosomal subunit. Forms a cluster with proteins L14 and L19.

In terms of biological role, one of the primary rRNA binding proteins, it binds directly near the 3'-end of the 23S rRNA, where it nucleates assembly of the 50S subunit. The sequence is that of Large ribosomal subunit protein uL3 from Prochlorococcus marinus (strain MIT 9301).